We begin with the raw amino-acid sequence, 250 residues long: Low affinity immunoglobulin gamma Fc region receptor III-A (250 aa).

The first 20 residues, 1–20, serve as a signal peptide directing secretion; the sequence is MWRLLSPTALLLLVSAGTRA. Residues 21–207 lie on the Extracellular side of the membrane; it reads ADLSKAMVVL…TSTFLPHWYQ (187 aa). 2 Ig-like C2-type domains span residues 32 to 105 and 120 to 189; these read PEWN…LEVH and EGDT…VNIT. Disulfide bonds link Cys-47/Cys-89 and Cys-128/Cys-172. N-linked (GlcNAc...) asparagine glycans are attached at residues Asn-63, Asn-133, Asn-180, and Asn-187. A helical membrane pass occupies residues 208–228; it reads IAFFLVTALLFVVDTGLHVAV. Over 229–250 the chain is Cytoplasmic; it reads QRDLQSSVKEWKDGKVTWSHGP.

Forms a heterooligomeric complex with ITAM-containing signaling subunits FCER1G. Interacts (via transmembrane domain) with signaling subunits; this interaction is a prerequisite for receptor complex expression on the cell surface and intracellular signal transduction. Binds the Fc region of antigen-complexed IgG.

It is found in the cell membrane. Functionally, receptor for the invariable Fc fragment of immunoglobulin gamma (IgG). Optimally activated upon binding of clustered antigen-IgG complexes displayed on cell surfaces, triggers lysis of antibody-coated cells, a process known as antibody-dependent cellular cytotoxicity (ADCC). Does not bind free monomeric IgG, thus avoiding inappropriate effector cell activation in the absence of antigenic trigger. Mediates IgG effector functions on natural killer (NK) cells. Binds antigen-IgG complexes generated upon infection and triggers NK cell-dependent cytokine production and degranulation to limit viral load and propagation. Fc-binding subunit that associates with FCER1G adapter to form functional signaling complexes. Following the engagement of antigen-IgG complexes, triggers phosphorylation of immunoreceptor tyrosine-based activation motif (ITAM)-containing adapter with subsequent activation of phosphatidylinositol 3-kinase signaling and sustained elevation of intracellular calcium that ultimately drive NK cell activation. Mediates enhanced ADCC in response to afucosylated IgGs. The polypeptide is Low affinity immunoglobulin gamma Fc region receptor III-A (Felis catus (Cat)).